The chain runs to 506 residues: GMP synthase [glutamine-hydrolyzing] (506 aa).

One can recognise a Glutamine amidotransferase type-1 domain in the interval 3–188 (GFVILDFGSQ…AQGMCKAPAD (186 aa)). Cysteine 80 acts as the Nucleophile in catalysis. Residues histidine 162 and glutamate 164 contribute to the active site. The 193-residue stretch at 189–381 (WDAPHIKDIL…LGLPKEMLWR (193 aa)) folds into the GMPS ATP-PPase domain. An ATP-binding site is contributed by 217 to 223 (SGGVDST).

As to quaternary structure, homodimer.

The enzyme catalyses XMP + L-glutamine + ATP + H2O = GMP + L-glutamate + AMP + diphosphate + 2 H(+). It participates in purine metabolism; GMP biosynthesis; GMP from XMP (L-Gln route): step 1/1. Catalyzes the synthesis of GMP from XMP. This is GMP synthase [glutamine-hydrolyzing] from Bdellovibrio bacteriovorus (strain ATCC 15356 / DSM 50701 / NCIMB 9529 / HD100).